The following is an 847-amino-acid chain: Protein HIR2 (847 aa).

WD repeat units follow at residues 10-46, 113-153, 155-194, 259-305, and 309-348; these read LHDG…NAAT, KDNE…LKSS, ELKS…TTKL, KFSP…PLFD, and VVNS…LGDV. The segment at 368–399 is disordered; the sequence is PFKPKAEEPDTKLPPNKTAQQTTTNSKKQPKA. Over residues 384–394 the composition is skewed to polar residues; the sequence is KTAQQTTTNSK. WD repeat units lie at residues 508–548 and 558–597; these read RKDN…IYVT and PMLL…IAFP.

The protein belongs to the WD repeat HIR1 family.

The protein resides in the nucleus. Required for replication-independent chromatin assembly and for the periodic repression of histone gene transcription during the cell cycle. The sequence is that of Protein HIR2 (HIR2) from Kluyveromyces lactis (strain ATCC 8585 / CBS 2359 / DSM 70799 / NBRC 1267 / NRRL Y-1140 / WM37) (Yeast).